The chain runs to 148 residues: SsrA-binding protein (148 aa).

Over residues 129–142 (ETEKKRDWEREKAR) the composition is skewed to basic and acidic residues. A disordered region spans residues 129–148 (ETEKKRDWEREKARIMRAGT).

Belongs to the SmpB family.

Its subcellular location is the cytoplasm. Required for rescue of stalled ribosomes mediated by trans-translation. Binds to transfer-messenger RNA (tmRNA), required for stable association of tmRNA with ribosomes. tmRNA and SmpB together mimic tRNA shape, replacing the anticodon stem-loop with SmpB. tmRNA is encoded by the ssrA gene; the 2 termini fold to resemble tRNA(Ala) and it encodes a 'tag peptide', a short internal open reading frame. During trans-translation Ala-aminoacylated tmRNA acts like a tRNA, entering the A-site of stalled ribosomes, displacing the stalled mRNA. The ribosome then switches to translate the ORF on the tmRNA; the nascent peptide is terminated with the 'tag peptide' encoded by the tmRNA and targeted for degradation. The ribosome is freed to recommence translation, which seems to be the essential function of trans-translation. In Burkholderia lata (strain ATCC 17760 / DSM 23089 / LMG 22485 / NCIMB 9086 / R18194 / 383), this protein is SsrA-binding protein.